The following is a 919-amino-acid chain: Calcium-transporting ATPase type 2C member 1 (919 aa).

Residues 1 to 70 are Cytoplasmic-facing; the sequence is MKVARFQKIP…NEFDISEDEP (70 aa). The helical transmembrane segment at 71–91 threads the bilayer; that stretch reads LWKKYISQFKNPLIMLLLASA. The Lumenal segment spans residues 92–104; that stretch reads VISVLMHQFDDAV. The helical transmembrane segment at 105–123 threads the bilayer; that stretch reads SITVAILIVVTVAFVQEYR. Over 124-262 the chain is Cytoplasmic; it reads SEKSLEELSK…APKTPLQKSM (139 aa). The chain crosses the membrane as a helical span at residues 263-282; it reads DLLGKQLSFYSFGIIGIIML. Topologically, residues 283-294 are lumenal; sequence VGWLLGKDILEM. Residues 295 to 312 traverse the membrane as a helical segment; that stretch reads FTISVSLAVAAIPEGLPI. Positions 303, 304, 306, and 308 each coordinate Ca(2+). Over 313–699 the chain is Cytoplasmic; the sequence is VVTVTLALGV…EEGKGIYNNI (387 aa). The 4-aspartylphosphate intermediate role is filled by Asp350. Positions 644 and 648 each coordinate Mg(2+). A helical membrane pass occupies residues 700–719; it reads KNFVRFQLSTSIAALTLISL. At 720-729 the chain is on the lumenal side; that stretch reads ATLMNFPNPL. A helical membrane pass occupies residues 730 to 750; sequence NAMQILWINIIMDGPPAQSLG. Residues Asn738 and Asp742 each coordinate Ca(2+). Residues 751 to 770 lie on the Cytoplasmic side of the membrane; it reads VEPVDKDVIRKPPRNWKDSI. The helical transmembrane segment at 771-793 threads the bilayer; that stretch reads LTKNLILKILVSSIIIVCGTLFV. Over 794–808 the chain is Lumenal; the sequence is FWRELRDNVITPRDT. Residues 809-828 traverse the membrane as a helical segment; it reads TMTFTCFVFFDMFNALSSRS. The Cytoplasmic portion of the chain corresponds to 829 to 841; the sequence is QTKSVFEIGLCSN. Residues 842–860 traverse the membrane as a helical segment; that stretch reads RMFCYAVLGSIMGQLLVIY. Residues 861–875 are Lumenal-facing; it reads FPPLQKVFQTESLSI. A helical transmembrane segment spans residues 876-896; sequence LDLLFLLGLTSSVCIVAEIIK. Over 897–919 the chain is Cytoplasmic; sequence KVERSREKIQKHVSSTSSSFLEV.

It belongs to the cation transport ATPase (P-type) (TC 3.A.3) family. Type IIA subfamily. Monomer. Homodimer. Found in most tissues except colon, thymus, spleen and leukocytes. Expressed in keratinocytes (at protein level).

The protein resides in the golgi apparatus. It is found in the trans-Golgi network membrane. The protein localises to the golgi stack membrane. The catalysed reaction is Ca(2+)(in) + ATP + H2O = Ca(2+)(out) + ADP + phosphate + H(+). It catalyses the reaction Mn(2+)(in) + ATP + H2O = Mn(2+)(out) + ADP + phosphate + H(+). Functionally, ATP-driven pump that supplies the Golgi apparatus with Ca(2+) and Mn(2+) ions, both essential cofactors for processing and trafficking of newly synthesized proteins in the secretory pathway. Within a catalytic cycle, acquires Ca(2+) or Mn(2+) ions on the cytoplasmic side of the membrane and delivers them to the lumenal side. The transfer of ions across the membrane is coupled to ATP hydrolysis and is associated with a transient phosphorylation that shifts the pump conformation from inward-facing to outward-facing state. Plays a primary role in the maintenance of Ca(2+) homeostasis in the trans-Golgi compartment with a functional impact on Golgi and post-Golgi protein sorting as well as a structural impact on cisternae morphology. Responsible for loading the Golgi stores with Ca(2+) ions in keratinocytes, contributing to keratinocyte differentiation and epidermis integrity. Participates in Ca(2+) and Mn(2+) ions uptake into the Golgi store of hippocampal neurons and regulates protein trafficking required for neural polarity. May also play a role in the maintenance of Ca(2+) and Mn(2+) homeostasis and signaling in the cytosol while preventing cytotoxicity. This Homo sapiens (Human) protein is Calcium-transporting ATPase type 2C member 1.